A 483-amino-acid polypeptide reads, in one-letter code: UDP-N-acetylmuramoyl-L-alanyl-D-glutamate--2,6-diaminopimelate ligase (483 aa).

S30 is a UDP-N-acetyl-alpha-D-muramoyl-L-alanyl-D-glutamate binding site. 109–115 serves as a coordination point for ATP; sequence GTNGKTT. UDP-N-acetyl-alpha-D-muramoyl-L-alanyl-D-glutamate-binding positions include 151–152, S178, and R186; that span reads TT. The residue at position 218 (K218) is an N6-carboxylysine. Residues R380, 403-406, G453, and E457 contribute to the meso-2,6-diaminopimelate site; that span reads DNPR. Residues 403–406 carry the Meso-diaminopimelate recognition motif motif; that stretch reads DNPR.

Belongs to the MurCDEF family. MurE subfamily. The cofactor is Mg(2+). Post-translationally, carboxylation is probably crucial for Mg(2+) binding and, consequently, for the gamma-phosphate positioning of ATP.

The protein localises to the cytoplasm. It catalyses the reaction UDP-N-acetyl-alpha-D-muramoyl-L-alanyl-D-glutamate + meso-2,6-diaminopimelate + ATP = UDP-N-acetyl-alpha-D-muramoyl-L-alanyl-gamma-D-glutamyl-meso-2,6-diaminopimelate + ADP + phosphate + H(+). It participates in cell wall biogenesis; peptidoglycan biosynthesis. Functionally, catalyzes the addition of meso-diaminopimelic acid to the nucleotide precursor UDP-N-acetylmuramoyl-L-alanyl-D-glutamate (UMAG) in the biosynthesis of bacterial cell-wall peptidoglycan. This Chlamydia abortus (strain DSM 27085 / S26/3) (Chlamydophila abortus) protein is UDP-N-acetylmuramoyl-L-alanyl-D-glutamate--2,6-diaminopimelate ligase.